The following is a 456-amino-acid chain: RuvB-like 1 (456 aa).

70-77 (GPPGTGKT) provides a ligand contact to ATP.

The protein belongs to the RuvB family. As to quaternary structure, forms homohexameric rings. Can form a dodecamer with ruvbl2 made of two stacked hexameric rings. Is a component of the RNA polymerase II holoenzyme complex. Component of the chromatin-remodeling Ino80 complex. Component of some MLL1/MLL complex.

It localises to the nucleus. The protein resides in the dynein axonemal particle. It catalyses the reaction ATP + H2O = ADP + phosphate + H(+). Has single-stranded DNA-stimulated ATPase and ATP-dependent DNA helicase (3' to 5') activity suggesting a role in nuclear processes such as recombination and transcription. Proposed core component of the chromatin remodeling INO80 complex which exhibits DNA- and nucleosome-activated ATPase activity and catalyzes ATP-dependent nucleosome sliding. This chain is RuvB-like 1 (ruvbl1), found in Xenopus laevis (African clawed frog).